Here is a 258-residue protein sequence, read N- to C-terminus: Phosphate import ATP-binding protein PstB (258 aa).

An ABC transporter domain is found at 5-247; sequence LDLKGVNIYY…EKIFSNPSQK (243 aa). 37-44 provides a ligand contact to ATP; that stretch reads GPSGCGKT.

It belongs to the ABC transporter superfamily. Phosphate importer (TC 3.A.1.7) family. In terms of assembly, the complex is composed of two ATP-binding proteins (PstB), two transmembrane proteins (PstC and PstA) and a solute-binding protein (PstS).

The protein resides in the cell membrane. It carries out the reaction phosphate(out) + ATP + H2O = ADP + 2 phosphate(in) + H(+). Its function is as follows. Part of the ABC transporter complex PstSACB involved in phosphate import. Responsible for energy coupling to the transport system. This chain is Phosphate import ATP-binding protein PstB, found in Mycolicibacterium paratuberculosis (strain ATCC BAA-968 / K-10) (Mycobacterium paratuberculosis).